The chain runs to 384 residues: Anhydro-N-acetylmuramic acid kinase (384 aa).

Gly-17–Asp-24 serves as a coordination point for ATP.

The protein belongs to the anhydro-N-acetylmuramic acid kinase family.

The catalysed reaction is 1,6-anhydro-N-acetyl-beta-muramate + ATP + H2O = N-acetyl-D-muramate 6-phosphate + ADP + H(+). It participates in amino-sugar metabolism; 1,6-anhydro-N-acetylmuramate degradation. Its pathway is cell wall biogenesis; peptidoglycan recycling. Functionally, catalyzes the specific phosphorylation of 1,6-anhydro-N-acetylmuramic acid (anhMurNAc) with the simultaneous cleavage of the 1,6-anhydro ring, generating MurNAc-6-P. Is required for the utilization of anhMurNAc either imported from the medium or derived from its own cell wall murein, and thus plays a role in cell wall recycling. This Burkholderia thailandensis (strain ATCC 700388 / DSM 13276 / CCUG 48851 / CIP 106301 / E264) protein is Anhydro-N-acetylmuramic acid kinase.